Reading from the N-terminus, the 298-residue chain is Tryptophan 2,3-dioxygenase (298 aa).

Residues 51–55 (FIIQH), Y113, and R117 contribute to the substrate site. H240 serves as a coordination point for heme. Position 254 (T254) interacts with substrate.

This sequence belongs to the tryptophan 2,3-dioxygenase family. As to quaternary structure, homotetramer. Requires heme as cofactor.

The catalysed reaction is L-tryptophan + O2 = N-formyl-L-kynurenine. It functions in the pathway amino-acid degradation; L-tryptophan degradation via kynurenine pathway; L-kynurenine from L-tryptophan: step 1/2. Heme-dependent dioxygenase that catalyzes the oxidative cleavage of the L-tryptophan (L-Trp) pyrrole ring and converts L-tryptophan to N-formyl-L-kynurenine. Catalyzes the oxidative cleavage of the indole moiety. In Xanthomonas campestris pv. campestris (strain 8004), this protein is Tryptophan 2,3-dioxygenase.